Reading from the N-terminus, the 137-residue chain is Putative pre-16S rRNA nuclease (137 aa).

This sequence belongs to the YqgF nuclease family.

The protein localises to the cytoplasm. Functionally, could be a nuclease involved in processing of the 5'-end of pre-16S rRNA. The chain is Putative pre-16S rRNA nuclease from Clostridium perfringens (strain ATCC 13124 / DSM 756 / JCM 1290 / NCIMB 6125 / NCTC 8237 / Type A).